Consider the following 502-residue polypeptide: Probable glycine dehydrogenase (decarboxylating) subunit 2 (502 aa).

Residue lysine 273 is modified to N6-(pyridoxal phosphate)lysine.

This sequence belongs to the GcvP family. C-terminal subunit subfamily. As to quaternary structure, the glycine cleavage system is composed of four proteins: P, T, L and H. In this organism, the P 'protein' is a heterodimer of two subunits. Requires pyridoxal 5'-phosphate as cofactor.

It carries out the reaction N(6)-[(R)-lipoyl]-L-lysyl-[glycine-cleavage complex H protein] + glycine + H(+) = N(6)-[(R)-S(8)-aminomethyldihydrolipoyl]-L-lysyl-[glycine-cleavage complex H protein] + CO2. The glycine cleavage system catalyzes the degradation of glycine. The P protein binds the alpha-amino group of glycine through its pyridoxal phosphate cofactor; CO(2) is released and the remaining methylamine moiety is then transferred to the lipoamide cofactor of the H protein. This Thermococcus onnurineus (strain NA1) protein is Probable glycine dehydrogenase (decarboxylating) subunit 2.